Consider the following 238-residue polypeptide: Valine-rich protein (238 aa).

The signal sequence occupies residues 1 to 16; sequence MQAVLLVVALFGAALA.

Prismatic layer of shell (at protein level). Expressed primarily in the mantle with highest level in the mantle edge and lower level in the mantle pallium.

The protein resides in the secreted. This Margaritifera margaritifera (Freshwater pearl mussel) protein is Valine-rich protein.